Here is a 310-residue protein sequence, read N- to C-terminus: Protein FIP2 (310 aa).

The interval 1–58 is disordered; sequence MGFAPVTPAAVETYDPDVDHDDESNGLDGFRVRSKRSGKFSGGYSDSPREVGDGYGVR. A compositionally biased stretch (acidic residues) spans 14–25; sequence YDPDVDHDDESN. Phosphoserine is present on residues serine 77 and serine 105. Disordered stretches follow at residues 115-135, 152-171, and 177-221; these read ATRL…GSGG, FKPK…LDYD, and DRAE…GSSS. The span at 208–221 shows a compositional bias: polar residues; it reads PRNTGASNGYGSSS.

Interacts with FRI. Interacts with WAV3.

The chain is Protein FIP2 from Arabidopsis thaliana (Mouse-ear cress).